The primary structure comprises 146 residues: Suppressor APC domain-containing protein 1 (146 aa).

The segment at 121 to 146 (HRKGVTQSTGEVVSQAPPGPKGPTLV) is disordered. Over residues 137 to 146 (PPGPKGPTLV) the composition is skewed to pro residues.

This Mus musculus (Mouse) protein is Suppressor APC domain-containing protein 1 (Sapcd1).